The following is a 71-amino-acid chain: Biotinylated protein TB7.3 homolog (71 aa).

The Biotinyl-binding domain occupies 2 to 71 (AEDVRAEIVA…QAGHLIAVID (70 aa)). Lys37 is subject to N6-biotinyllysine.

The sequence is that of Biotinylated protein TB7.3 homolog from Mycolicibacterium smegmatis (strain ATCC 700084 / mc(2)155) (Mycobacterium smegmatis).